The sequence spans 260 residues: Carbonic anhydrase 3 (260 aa).

Alanine 2 is subject to N-acetylalanine. In terms of domain architecture, Alpha-carbonic anhydrase spans 3–259; it reads KEWGYADHNG…LKGRVVRASF (257 aa). Residues serine 29, serine 43, serine 50, and serine 55 each carry the phosphoserine modification. Residues 64 to 67 are involved in proton transfer; the sequence is RTCR. Threonine 73 carries the post-translational modification Phosphothreonine. Zn(2+) contacts are provided by histidine 94, histidine 96, and histidine 119. Tyrosine 127 is subject to Phosphotyrosine. 2 positions are modified to phosphothreonine: threonine 129 and threonine 176. S-glutathionyl cysteine is present on residues cysteine 182 and cysteine 187. Residue 198 to 199 participates in substrate binding; the sequence is TT. Threonine 216 carries the post-translational modification Phosphothreonine. Serine 219 is modified (phosphoserine).

This sequence belongs to the alpha-carbonic anhydrase family. Zn(2+) is required as a cofactor. S-thiolated both by thiol-disulfide exchange with glutathione disulfide and by oxyradical-initiated S-thiolation with reduced glutathione. In terms of processing, S-glutathionylated in hepatocytes under oxidative stress.

Its subcellular location is the cytoplasm. It carries out the reaction hydrogencarbonate + H(+) = CO2 + H2O. With respect to regulation, inhibited by acetazolamide. In terms of biological role, reversible hydration of carbon dioxide. This Equus caballus (Horse) protein is Carbonic anhydrase 3 (CA3).